The following is a 184-amino-acid chain: Jacalin-related lectin 2 (184 aa).

Positions 4–163 (KIKIGPVGTD…LQNIGVYLQP (160 aa)) constitute a Jacalin-type lectin domain.

It belongs to the jacalin lectin family.

This is Jacalin-related lectin 2 (JAL2) from Arabidopsis thaliana (Mouse-ear cress).